The primary structure comprises 690 residues: Eukaryotic translation initiation factor 3 subunit B (690 aa).

Residues 1-11 (MAKKKSEEHSG) show a composition bias toward basic and acidic residues. The interval 1–36 (MAKKKSEEHSGADANDSDYQEEPNFEDPPGFVDNIS) is disordered. Residues 15 to 25 (NDSDYQEEPNF) are compositionally biased toward acidic residues. The 85-residue stretch at 57-141 (SVVVVDNIPK…HTFAVNLFTD (85 aa)) folds into the RRM domain. WD repeat units lie at residues 207–246 (TRER…KIQK), 293–331 (DGMS…LLDL), 334–369 (IKIP…TLME), 442–484 (EIRE…KPSL), and 530–575 (PDHF…IKRT). Residues 595 to 645 (EEKQKEIKKNLKKYYAAFEQKDRLRLTRASKELLEKRSQLRETFMEYRNKR) adopt a coiled-coil conformation.

It belongs to the eIF-3 subunit B family. Component of the eukaryotic translation initiation factor 3 (eIF-3) complex. The eIF-3 complex interacts with pix. Interacts with mxt.

Its subcellular location is the cytoplasm. In terms of biological role, RNA-binding component of the eukaryotic translation initiation factor 3 (eIF-3) complex, which is involved in protein synthesis of a specialized repertoire of mRNAs and, together with other initiation factors, stimulates binding of mRNA and methionyl-tRNAi to the 40S ribosome. The eIF-3 complex specifically targets and initiates translation of a subset of mRNAs involved in cell proliferation. This chain is Eukaryotic translation initiation factor 3 subunit B, found in Drosophila simulans (Fruit fly).